Here is a 154-residue protein sequence, read N- to C-terminus: Transcription antitermination protein NusB (154 aa).

The protein belongs to the NusB family.

Functionally, involved in transcription antitermination. Required for transcription of ribosomal RNA (rRNA) genes. Binds specifically to the boxA antiterminator sequence of the ribosomal RNA (rrn) operons. In Oleidesulfovibrio alaskensis (strain ATCC BAA-1058 / DSM 17464 / G20) (Desulfovibrio alaskensis), this protein is Transcription antitermination protein NusB.